A 102-amino-acid polypeptide reads, in one-letter code: Small ribosomal subunit protein uS10 (102 aa).

Belongs to the universal ribosomal protein uS10 family. As to quaternary structure, part of the 30S ribosomal subunit.

In terms of biological role, involved in the binding of tRNA to the ribosomes. In Rhizobium meliloti (strain 1021) (Ensifer meliloti), this protein is Small ribosomal subunit protein uS10.